Consider the following 835-residue polypeptide: Probable alpha-glucuronidase A (835 aa).

A signal peptide spans 1–18 (MRWSFLTVLLWLVSLTGA). N-linked (GlcNAc...) asparagine glycans are attached at residues Asn49, Asn101, Asn148, Asn221, Asn278, Asn309, Asn342, Asn460, Asn522, Asn571, Asn677, and Asn727.

This sequence belongs to the glycosyl hydrolase 67 family.

It localises to the secreted. The catalysed reaction is an alpha-D-glucuronoside + H2O = D-glucuronate + an alcohol. Its function is as follows. Alpha-glucuronidase involved in the hydrolysis of xylan, a major structural heterogeneous polysaccharide found in plant biomass representing the second most abundant polysaccharide in the biosphere, after cellulose. Releases 4-O-methylglucuronic acid from xylan. The protein is Probable alpha-glucuronidase A (aguA) of Aspergillus oryzae (strain ATCC 42149 / RIB 40) (Yellow koji mold).